Here is a 334-residue protein sequence, read N- to C-terminus: Probable aminoacyl tRNA synthase complex-interacting multifunctional protein 2 (334 aa).

A GST C-terminal domain is found at 280–327 (LDKRLQKQQYFGGSQMSVADVGVYSSLIRMPAVTEKDLTPALVAWRKR).

Component of the aminoacyl-tRNA synthase complex which is comprised of a bifunctional glutamyl-prolyl-tRNA synthase, the monospecific isoleucyl, leucyl, glutaminyl, methionyl, lysyl, arginyl and aspartyl-tRNA synthases, and three auxiliary proteins.

It is found in the cytoplasm. It localises to the cytosol. Its subcellular location is the nucleus. Required for assembly and stability of the aminoacyl-tRNA synthase complex. The chain is Probable aminoacyl tRNA synthase complex-interacting multifunctional protein 2 from Drosophila melanogaster (Fruit fly).